Here is a 1500-residue protein sequence, read N- to C-terminus: Myosin-8 (1500 aa).

The Myosin N-terminal SH3-like domain occupies 8–57 (AVGSHVWVEDPDEAWLDGEVVEINGDQIKVLCASGKQVVVKDSNIYPKDV). In terms of domain architecture, Myosin motor spans 62-732 (SGVEDMTRLA…QMADLDTRRT (671 aa)). Residues 156–163 (GESGAGKT) and 210–218 (NNNSSRFGK) each bind ATP. Actin-binding regions lie at residues 496–530 (LIEKKPGGIIALLDEACMFPRSTHETFAQKLYQTY), 532–555 (NHKRFTKPKLARSDFTICHYAGDV), 590–613 (FPPVSDDSKQSKFSSIGTRFKQQL), and 613–635 (LVSLLEILNTTEPHYIRCIKPNN). IQ domains follow at residues 735–764 (LGRSASIIQRKVRSYLAQKTFIQLRISATQ), 758–787 (LRISATQIQAVCRGYLARSIYEGMRREAAA), 783–812 (REAAALKIQRDLRKFLARKAYTELFSATIL), 806–835 (LFSATILIQAGMRGMVSRKELCLRRQTKAA), 831–860 (QTKAATIIQTRCRVYLARLHYRKLKKAAIT), and 854–883 (LKKAAITTQCAWRGKVARKELKNLKMAARE). Residues 884-1049 (TGALQEAKNK…TEKQIMLQQT (166 aa)) adopt a coiled-coil conformation. The Dilute domain maps to 1146–1447 (DRLIEMIGSA…ISSMRALMTE (302 aa)).

The protein belongs to the TRAFAC class myosin-kinesin ATPase superfamily. Myosin family. Plant myosin class XI subfamily. As to quaternary structure, homodimer.

Its subcellular location is the cytoplasm. In terms of biological role, myosin heavy chain that is required for the cell cycle-regulated transport of various organelles and proteins for their segregation. Functions by binding with its tail domain to receptor proteins on organelles and exerting force with its N-terminal motor domain against actin filaments, thereby transporting its cargo along polarized actin cables. The protein is Myosin-8 (XI-B) of Arabidopsis thaliana (Mouse-ear cress).